The primary structure comprises 593 residues: ATPase family AAA domain-containing protein 3-B (593 aa).

Disordered stretches follow at residues 1-64 (MSWL…LDQS), 109-129 (EEKR…AQYQ), and 145-164 (QLQN…KQEA). Residues 1-242 (MSWLFGLNRG…FRTFISDWDK (242 aa)) are Mitochondrial intermembrane-facing. The segment covering 12–27 (PEPPGVPGFPEPPSPP) has biased composition (pro residues). Basic and acidic residues-rich tracts occupy residues 33–44 (GGDKNRPKDKWS), 53–64 (RAAKAARELDQS), 109–121 (EEKR…ETKQ), and 150–164 (ENLR…KQEA). Positions 51 to 215 (LERAAKAARE…QIRLKAAEHR (165 aa)) form a coiled coil. Residues 243–260 (VTATVAGLTLLAVGVYTA) form a helical membrane-spanning segment. At 261–593 (KNGTGVAGRY…LQPLLEGTPV (333 aa)) the chain is on the mitochondrial matrix side. 348–355 (GPPGTGKT) contacts ATP. Positions 570–580 (AEGKESTKEIG) are enriched in basic and acidic residues. The disordered stretch occupies residues 570 to 593 (AEGKESTKEIGKNPLQPLLEGTPV).

This sequence belongs to the AAA ATPase family. As to quaternary structure, can form homooligomers. Homodimer formation at the N-terminus may be regulated by ATP and is required for the interaction with the inner surface of the mitochondrial outer membrane and correct mitochondrial homeostasis.

Its subcellular location is the mitochondrion inner membrane. It localises to the mitochondrion matrix. It is found in the mitochondrion nucleoid. The enzyme catalyses ATP + H2O = ADP + phosphate + H(+). In terms of biological role, essential for mitochondrial network organization, mitochondrial metabolism and cell growth at organism and cellular level. May play an important role in mitochondrial protein synthesis. May also participate in mitochondrial DNA replication. May bind to mitochondrial DNA D-loops and contribute to nucleoid stability. Required for enhanced channeling of cholesterol for hormone-dependent steroidogenesis. Involved in mitochondrial-mediated antiviral innate immunity. Required to protect mitochondria from the PERK-mediated unfolded protein response: specifically inhibits the activity of EIF2AK3/PERK at mitochondria-endoplasmic reticulum contact sites, thereby providing a safe haven for mitochondrial protein translation during endoplasmic reticulum stress. Ability to inhibit EIF2AK3/PERK is independent of its ATPase activity. Also involved in the mitochondrial DNA damage response by promoting signaling between damaged genomes and the mitochondrial membrane, leading to activation of the integrated stress response (ISR). This is ATPase family AAA domain-containing protein 3-B (atad3-b) from Xenopus laevis (African clawed frog).